Reading from the N-terminus, the 489-residue chain is Protein LMBR1L (489 aa).

Over 1-21 the chain is Extracellular; that stretch reads MEAPDCEVLSVREQLFHERIR. Residues 1 to 59 form an interaction with LGB region; it reads MEAPDCEVLSVREQLFHERIRECIISTLLFATLYILCHIFLTRFKKPAEFTTVDDADAT. Residues 1-76 form an LCN1-binding region; it reads MEAPDCEVLS…LCTFTLAIAL (76 aa). Residues 22-42 traverse the membrane as a helical segment; it reads ECIISTLLFATLYILCHIFLT. Topologically, residues 43–66 are cytoplasmic; it reads RFKKPAEFTTVDDADATVNKIALE. The helical transmembrane segment at 67-87 threads the bilayer; it reads LCTFTLAIALGAVLLLPFSII. The Extracellular segment spans residues 88–114; the sequence is SNEVLLSLPRNYYIQWLNGSLIHGLWN. The chain crosses the membrane as a helical span at residues 115–135; it reads LVFLFSNLSLIFLMPFAYFFT. The Cytoplasmic portion of the chain corresponds to 136–154; the sequence is ESEGFAGSRKGVLGRVYET. The helical transmembrane segment at 155 to 175 threads the bilayer; the sequence is VVMLMLLTLLVLGMVWVASAI. Residues 176 to 196 lie on the Extracellular side of the membrane; sequence VDNNKASRESLYDFWEYYLPY. A helical membrane pass occupies residues 197–217; it reads LYSCISFLGVLLLLVCTPLGL. The Cytoplasmic segment spans residues 218–305; sequence ARMFSVTGKL…NLGYPLAMLC (88 aa). Residues 306–326 traverse the membrane as a helical segment; that stretch reads LLVLTGLSVLIVAIHILELLI. Residues 327-350 are Extracellular-facing; the sequence is DEAAMPRGMQGASLGQVSFSKLGS. A helical transmembrane segment spans residues 351–371; the sequence is FGAVVQVVLIFYLMVSSVVGF. The Cytoplasmic portion of the chain corresponds to 372 to 388; the sequence is YSSPLFRSLRPRWHDTA. A helical transmembrane segment spans residues 389–409; the sequence is MTQIIGNCVCLLVLSSALPVF. The Extracellular portion of the chain corresponds to 410-431; sequence SRTLGLTRFDLLGDFGRFNWLG. Residues 432-452 form a helical membrane-spanning segment; that stretch reads NFYIVFLYNAAFAGLTTLCLV. Residues 453-489 are Cytoplasmic-facing; that stretch reads KTFTAAVRAELIRAFGLDRLPLPVSGFPRASRKTQHQ.

The protein belongs to the LIMR family. Dimer. Can also form higher oligomers. Interacts with LCN1; this interaction mediates the endocytosis of LCN1. Interacts with UBAC2, FAF2, VCP, AMFR, ZNRF3, CTNNB1, LRP6, GSK3A, GSK3B, FZD6, DVL2 and RNF43. Interaction with LGB and SCGB1A1 is controversial.

The protein resides in the cell membrane. It is found in the endoplasmic reticulum membrane. In terms of biological role, plays an essential role in lymphocyte development by negatively regulating the canonical Wnt signaling pathway. In association with UBAC2 and E3 ubiquitin-protein ligase AMFR, promotes the ubiquitin-mediated degradation of CTNNB1 and Wnt receptors FZD6 and LRP6. LMBR1L stabilizes the beta-catenin destruction complex that is required for regulating CTNNB1 levels. Acts as a LCN1 receptor and can mediate its endocytosis. The polypeptide is Protein LMBR1L (LMBR1L) (Macaca fascicularis (Crab-eating macaque)).